The following is a 189-amino-acid chain: Segregation and condensation protein B (189 aa).

Belongs to the ScpB family. Homodimer. Homodimerization may be required to stabilize the binding of ScpA to the Smc head domains. Component of a cohesin-like complex composed of ScpA, ScpB and the Smc homodimer, in which ScpA and ScpB bind to the head domain of Smc. The presence of the three proteins is required for the association of the complex with DNA.

The protein localises to the cytoplasm. Functionally, participates in chromosomal partition during cell division. May act via the formation of a condensin-like complex containing Smc and ScpA that pull DNA away from mid-cell into both cell halves. This is Segregation and condensation protein B from Lachnoclostridium phytofermentans (strain ATCC 700394 / DSM 18823 / ISDg) (Clostridium phytofermentans).